The chain runs to 83 residues: Large ribosomal subunit protein bL27 (83 aa).

The interval 1-25 (MAHKKGQGASRNGRDSESKRLGLKV) is disordered.

The protein belongs to the bacterial ribosomal protein bL27 family.

This Chlamydia trachomatis serovar L2 (strain ATCC VR-902B / DSM 19102 / 434/Bu) protein is Large ribosomal subunit protein bL27.